We begin with the raw amino-acid sequence, 123 residues long: ATP synthase epsilon chain (123 aa).

The protein belongs to the ATPase epsilon chain family. In terms of assembly, F-type ATPases have 2 components, CF(1) - the catalytic core - and CF(0) - the membrane proton channel. CF(1) has five subunits: alpha(3), beta(3), gamma(1), delta(1), epsilon(1). CF(0) has three main subunits: a, b and c.

The protein localises to the cell inner membrane. In terms of biological role, produces ATP from ADP in the presence of a proton gradient across the membrane. The sequence is that of ATP synthase epsilon chain from Helicobacter pylori (strain G27).